Reading from the N-terminus, the 107-residue chain is Metallothionein-1 (107 aa).

Positions 1-2 (MD) are excised as a propeptide.

This sequence belongs to the metallothionein superfamily. Type 7 family.

Its function is as follows. The metallothioneins are involved in the cellular sequestration of toxic metal ions. Binds 12 cadmium ions per molecule. The protein is Metallothionein-1 of Tetrahymena pyriformis.